Consider the following 219-residue polypeptide: uncharacterized protein (219 aa).

Residue aspartate 58 is part of the active site.

The protein belongs to the pseudouridine synthase RluA family.

It carries out the reaction a uridine in RNA = a pseudouridine in RNA. This is an uncharacterized protein from Zymomonas mobilis subsp. mobilis (strain ATCC 31821 / ZM4 / CP4).